A 65-amino-acid polypeptide reads, in one-letter code: MMHVCSLLVSFDVVKSLTQSVKHLSTRLEYKRMKSFICFCSTTFWNSCCSLEFNASIFTVLSYCS.

The N-terminal stretch at 1–16 is a signal peptide; the sequence is MMHVCSLLVSFDVVKS.

This is an uncharacterized protein from Saccharomyces cerevisiae (strain ATCC 204508 / S288c) (Baker's yeast).